The following is a 632-amino-acid chain: DNA mismatch repair protein MutL (632 aa).

Positions 376-397 (EQPQAEPRQSFTPGSGAGSGYQ) are disordered.

This sequence belongs to the DNA mismatch repair MutL/HexB family.

This protein is involved in the repair of mismatches in DNA. It is required for dam-dependent methyl-directed DNA mismatch repair. May act as a 'molecular matchmaker', a protein that promotes the formation of a stable complex between two or more DNA-binding proteins in an ATP-dependent manner without itself being part of a final effector complex. In Pseudomonas entomophila (strain L48), this protein is DNA mismatch repair protein MutL.